A 389-amino-acid chain; its full sequence is Xylose isomerase (389 aa).

Catalysis depends on residues histidine 54 and aspartate 57. Glutamate 181, glutamate 217, histidine 220, aspartate 245, aspartate 255, aspartate 257, and aspartate 287 together coordinate Mg(2+).

The protein belongs to the xylose isomerase family. Homotetramer. Mg(2+) is required as a cofactor.

It is found in the cytoplasm. It catalyses the reaction alpha-D-xylose = alpha-D-xylulofuranose. Involved in D-xylose catabolism. The protein is Xylose isomerase (xylA) of Streptomyces violaceusniger.